Here is a 421-residue protein sequence, read N- to C-terminus: Core-capsid bridging protein (421 aa).

The protein belongs to the adenoviridae core-capsid bridging protein family. As to quaternary structure, monomer. Homodimer. Exists in equilibrium between monomers and dimers in solution. Interacts with the histone-like nucleoprotein; this interactions bridge the virus core to the capsid. Interacts with core protein X; this interactions bridge the virus core to the capsid. Interacts with the endosome lysis protein VI; this interactions bridge the virus core to the capsid. Interacts with the peripentonal hexons. Interacts with host NPM1; this interaction might play a role in virus assembly.

The protein resides in the virion. The protein localises to the host nucleus. It is found in the host nucleolus. Associates loosely with the viral DNA to form an outer shell around the nucleoprotein-DNA complex and links it with the capsid by binding the endosome lysis protein. Dissociates from the viral genome during entry. Might be involved in nuclear capsid assembly of the viral particles through its association with NPM1/nucleophosmin. This is Core-capsid bridging protein from Canine adenovirus serotype 1 (strain CLL) (CAdV-1).